The chain runs to 126 residues: MARIAGVDLPRDKRVEIGLTYIYGIGLTRSKEILSKIELDPDTRVRDLPDNAIAQLREIIETDYQVEGDLRRFESMNIKRLADIGCYRGRRHRLNLPVRGQRTRTNARTRRGARQTVAGKKKAPSK.

The segment at 100-126 (GQRTRTNARTRRGARQTVAGKKKAPSK) is disordered. Residues 101–126 (QRTRTNARTRRGARQTVAGKKKAPSK) show a composition bias toward basic residues.

It belongs to the universal ribosomal protein uS13 family. Part of the 30S ribosomal subunit.

It localises to the plastid. Its subcellular location is the cyanelle. In terms of biological role, located at the top of the head of the 30S subunit, it contacts several helices of the 16S rRNA. This Cyanophora paradoxa protein is Small ribosomal subunit protein uS13c.